The following is a 539-amino-acid chain: 2-isopropylmalate synthase (539 aa).

Residues 8-269 (VLIFDTTLRD…YFNPFFGRPP (262 aa)) form the Pyruvate carboxyltransferase domain. 4 residues coordinate Mn(2+): Asp-17, His-208, His-210, and Asn-244. The tract at residues 408 to 539 (QLKLVQVSCG…DLAKVDKKGI (132 aa)) is regulatory domain.

The protein belongs to the alpha-IPM synthase/homocitrate synthase family. LeuA type 1 subfamily. In terms of assembly, homodimer. Requires Mn(2+) as cofactor.

The protein localises to the cytoplasm. It catalyses the reaction 3-methyl-2-oxobutanoate + acetyl-CoA + H2O = (2S)-2-isopropylmalate + CoA + H(+). It functions in the pathway amino-acid biosynthesis; L-leucine biosynthesis; L-leucine from 3-methyl-2-oxobutanoate: step 1/4. Functionally, catalyzes the condensation of the acetyl group of acetyl-CoA with 3-methyl-2-oxobutanoate (2-ketoisovalerate) to form 3-carboxy-3-hydroxy-4-methylpentanoate (2-isopropylmalate). The sequence is that of 2-isopropylmalate synthase from Prochlorococcus marinus (strain NATL1A).